The following is a 342-amino-acid chain: Nicotinate-nucleotide--dimethylbenzimidazole phosphoribosyltransferase (342 aa).

Residue glutamate 311 is the Proton acceptor of the active site.

This sequence belongs to the CobT family.

The enzyme catalyses 5,6-dimethylbenzimidazole + nicotinate beta-D-ribonucleotide = alpha-ribazole 5'-phosphate + nicotinate + H(+). It functions in the pathway nucleoside biosynthesis; alpha-ribazole biosynthesis; alpha-ribazole from 5,6-dimethylbenzimidazole: step 1/2. Catalyzes the synthesis of alpha-ribazole-5'-phosphate from nicotinate mononucleotide (NAMN) and 5,6-dimethylbenzimidazole (DMB). This chain is Nicotinate-nucleotide--dimethylbenzimidazole phosphoribosyltransferase, found in Shewanella sediminis (strain HAW-EB3).